Here is a 34-residue protein sequence, read N- to C-terminus: Photosystem I reaction center subunit XII (34 aa).

Residues 9 to 29 traverse the membrane as a helical segment; sequence LIILGLIVVMHAGVLALRLGI.

Belongs to the PsaM family.

The protein localises to the cellular thylakoid membrane. The polypeptide is Photosystem I reaction center subunit XII (Prochlorococcus marinus subsp. pastoris (strain CCMP1986 / NIES-2087 / MED4)).